A 61-amino-acid chain; its full sequence is Large ribosomal subunit protein bL28 (61 aa).

The tract at residues 1–26 is disordered; that stretch reads MAKDFVTGKHTRFGNTRSHALNHSRR.

This sequence belongs to the bacterial ribosomal protein bL28 family.

The sequence is that of Large ribosomal subunit protein bL28 from Pediococcus pentosaceus (strain ATCC 25745 / CCUG 21536 / LMG 10740 / 183-1w).